A 127-amino-acid polypeptide reads, in one-letter code: MPYRKLGRTSSQRKAMLRDLTTDLLINGRITTTEARAKEVRKTTDKMITLGKRGDLAARRQAAAFVRNEVADVIEDGDNVKVQSALQKLFDDVAPRFAERNGGYTRILKTVQRRGDAAQLVILELVD.

The protein belongs to the bacterial ribosomal protein bL17 family. In terms of assembly, part of the 50S ribosomal subunit. Contacts protein L32.

The chain is Large ribosomal subunit protein bL17 from Leuconostoc citreum (strain KM20).